We begin with the raw amino-acid sequence, 328 residues long: UPF0194 membrane protein YE2891 (328 aa).

The first 22 residues, 1–22, serve as a signal peptide directing secretion; it reads MNRKKIIVAVVIVALLAAIGYG. Coiled coils occupy residues 80–109 and 139–208; these read YVNA…REEE and ANKA…TTLL.

Belongs to the UPF0194 family.

The protein resides in the periplasm. The chain is UPF0194 membrane protein YE2891 from Yersinia enterocolitica serotype O:8 / biotype 1B (strain NCTC 13174 / 8081).